The primary structure comprises 422 residues: MLKAIILIGGPQKGTRFRPLSFEVPKPLFPVAGVPMLQHHIEACAQVPDMKEIMLIGFYQPNDELNRFIYSAQQEFKIPIRYLQEFAALGTGGGIYHFRDQILSGGPAAFFLMNADVCSEFPLLEMLQFHRQHGENHCGVLLGTTANRTQSLNYGCIVENHETNEVLHFVEKPSTFVSDIINCGIYLFTPDIFAHIGKVFQRNQQEKIQEELTHGRQMPEVVRLEQDIFTALAGQKKLFVYKTQHFWSQIKSAGSAIYASRLYLKQYHQTHPERLATNQGGTPKITGDVYIHPTANIDPSAVLGPNVSIGKGVTIGGGVRVRESIILHGAVLQDHCCVLNSIVGWDSTVGKWARVEGTPSDPNPNDPYAKIDSETLFRDGGLTPSITILGCNVNIPSEVIIRNSIVLPHKDLNRSFKNQIIL.

A substrate-binding domain region spans residues 2–253; that stretch reads LKAIILIGGP…QHFWSQIKSA (252 aa). Residues Glu-85 and Gln-249 each contribute to the GDP-alpha-D-mannose site. The hexapeptide repeat domain stretch occupies residues 275 to 422; it reads LATNQGGTPK…NRSFKNQIIL (148 aa). The tract at residues 358 to 386 is C-loop; it reads TPSDPNPNDPYAKIDSETLFRDGGLTPSI.

Belongs to the transferase hexapeptide repeat family. Component of the GMPPA-GMPPB mannose-1-phosphate guanylyltransferase complex composed of 4 GMPPA subunits and 8 GMPPB subunits; the complex is organized into three layers, a central layer made up of 2 GMPPA dimers sandwiched between two layers each made up of 2 GMPPB dimers.

It functions in the pathway nucleotide-sugar biosynthesis; GDP-alpha-D-mannose biosynthesis; GDP-alpha-D-mannose from alpha-D-mannose 1-phosphate (GTP route): step 1/1. Regulatory subunit of the GMPPA-GMPPB mannose-1-phosphate guanylyltransferase complex; reduces the catalytic activity of GMPPB when part of the complex. Mediates allosteric feedback inhibition of GMPPB catalytic activity upon binding GDP-alpha-D-mannose. Together with GMPPB regulates GDP-alpha-D-mannose levels. One of two paralogs (gmppaa and gmppab) that may have redundant functions. The polypeptide is Mannose-1-phosphate guanylyltransferase regulatory subunit alpha-B (gmppab) (Danio rerio (Zebrafish)).